Reading from the N-terminus, the 443-residue chain is D-serine dehydratase (443 aa).

Lys-118 is modified (N6-(pyridoxal phosphate)lysine).

The protein belongs to the serine/threonine dehydratase family. DsdA subfamily. Monomer. It depends on pyridoxal 5'-phosphate as a cofactor.

It catalyses the reaction D-serine = pyruvate + NH4(+). In Photorhabdus laumondii subsp. laumondii (strain DSM 15139 / CIP 105565 / TT01) (Photorhabdus luminescens subsp. laumondii), this protein is D-serine dehydratase.